A 122-amino-acid polypeptide reads, in one-letter code: Large ribosomal subunit protein uL14 (122 aa).

This sequence belongs to the universal ribosomal protein uL14 family. Part of the 50S ribosomal subunit. Forms a cluster with proteins L3 and L19. In the 70S ribosome, L14 and L19 interact and together make contacts with the 16S rRNA in bridges B5 and B8.

Functionally, binds to 23S rRNA. Forms part of two intersubunit bridges in the 70S ribosome. The protein is Large ribosomal subunit protein uL14 of Amoebophilus asiaticus (strain 5a2).